A 176-amino-acid polypeptide reads, in one-letter code: Ribosome maturation factor RimM (176 aa).

Residues 93–172 (KDEFFYFDII…KIQVKNSLDI (80 aa)) form the PRC barrel domain.

Belongs to the RimM family. Binds ribosomal protein uS19.

It is found in the cytoplasm. An accessory protein needed during the final step in the assembly of 30S ribosomal subunit, possibly for assembly of the head region. Essential for efficient processing of 16S rRNA. May be needed both before and after RbfA during the maturation of 16S rRNA. It has affinity for free ribosomal 30S subunits but not for 70S ribosomes. This chain is Ribosome maturation factor RimM, found in Campylobacter fetus subsp. fetus (strain 82-40).